The following is a 386-amino-acid chain: MTSHLFQTYGRRTIEFVKGTGTKVIDNKGKEYLDFTSGIGVCNLGHCHPTVLKGVQEQLDDIWHISNLFTNSLQEEVASLLTENRALDYVFFCNSGAEANEAALKLARKHTGKSLVVTCQQSFHGRTFGTMSATGQDKVKEGFGPLLPSFLHIPFNDIKALEEVMNEEVAAVMVEVVQGEGGVIPVDLSFLKEIETLCNKFGSLFIIDEVQTGIGRTGTLFAYEQVGIEPDIVTVAKALGNGIPVGAMIGGKELGTSFTAGSHGSTFGGNYIAMAAAKEVLQVSKKPSFLKEVQEKGEYVLEKLQEELQHVECIQNIRGKGLMIGIECKHEVASFIEQLENEGLLVLQAGPNVIRLLPPLIVTNEELEQAVYIIKKVVCTKNVSII.

Residues 96–97 (GA) and Phe123 contribute to the pyridoxal 5'-phosphate site. N(2)-acetyl-L-ornithine is bound at residue Arg126. 208 to 211 (DEVQ) is a binding site for pyridoxal 5'-phosphate. At Lys237 the chain carries N6-(pyridoxal phosphate)lysine. Ser265 lines the N(2)-acetyl-L-ornithine pocket. Thr266 is a pyridoxal 5'-phosphate binding site.

This sequence belongs to the class-III pyridoxal-phosphate-dependent aminotransferase family. ArgD subfamily. Homodimer. It depends on pyridoxal 5'-phosphate as a cofactor.

It is found in the cytoplasm. The enzyme catalyses N(2)-acetyl-L-ornithine + 2-oxoglutarate = N-acetyl-L-glutamate 5-semialdehyde + L-glutamate. It participates in amino-acid biosynthesis; L-arginine biosynthesis; N(2)-acetyl-L-ornithine from L-glutamate: step 4/4. This Bacillus cereus (strain ATCC 14579 / DSM 31 / CCUG 7414 / JCM 2152 / NBRC 15305 / NCIMB 9373 / NCTC 2599 / NRRL B-3711) protein is Acetylornithine aminotransferase.